A 2182-amino-acid chain; its full sequence is Autophagy-related protein 2 (2182 aa).

Disordered stretches follow at residues 291-375, 392-426, 523-630, 663-682, 736-758, and 793-816; these read SPSL…PLAD, EQDYPLGDSEDALGIPYEFSNPQDDDAEDSPATPR, YTHE…STTL, DIDPENPRASTKQQEDVATP, GAFSVHGATHAQQRSSQGTSSVE, and DKKPSPAEGSKQDTASKDAPSKET. 2 stretches are compositionally biased toward polar residues: residues 303–313 and 322–331; these read NPPSRQATELS and VSSSQASIRS. The span at 332-347 shows a compositional bias: basic and acidic residues; it reads NEPESASHHSLPENDH. 2 stretches are compositionally biased toward acidic residues: residues 528–540 and 613–624; these read AENEPAPEVEQTT and WDDDYDDPEEEP. The segment covering 745–758 has biased composition (polar residues); that stretch reads HAQQRSSQGTSSVE. A compositionally biased stretch (basic and acidic residues) spans 793 to 813; it reads DKKPSPAEGSKQDTASKDAPS.

Belongs to the ATG2 family. In terms of assembly, interacts with ATG18.

Its subcellular location is the preautophagosomal structure membrane. The protein localises to the endoplasmic reticulum membrane. The catalysed reaction is a 1,2-diacyl-sn-glycero-3-phosphocholine(in) = a 1,2-diacyl-sn-glycero-3-phosphocholine(out). It carries out the reaction a 1,2-diacyl-sn-glycero-3-phospho-L-serine(in) = a 1,2-diacyl-sn-glycero-3-phospho-L-serine(out). It catalyses the reaction a 1,2-diacyl-sn-glycero-3-phosphoethanolamine(in) = a 1,2-diacyl-sn-glycero-3-phosphoethanolamine(out). In terms of biological role, lipid transfer protein required for autophagosome completion and peroxisome degradation and peroxisome degradation. Tethers the edge of the isolation membrane (IM) to the endoplasmic reticulum (ER) and mediates direct lipid transfer from ER to IM for IM expansion. ATG2 binds to the ER exit site (ERES), which is the membrane source for autophagosome formation, using basic residues in its N-terminal region (NR) and to the expanding edge of the IM through its C-terminal region. The latter binding is assisted by an ATG18-PtdIns3P interaction. ATG2 then extracts phospholipids from the membrane source using its NR and transfers them to ATG9 to the IM through its predicted beta-sheet-rich structure for membrane expansion. Autophagy is required for proper vegetative growth, asexual/sexual reproduction, and full virulence. Autophagy is particularly involved in the biosynthesis of deoxynivalenol (DON), an important virulence determinant. This is Autophagy-related protein 2 from Gibberella zeae (strain ATCC MYA-4620 / CBS 123657 / FGSC 9075 / NRRL 31084 / PH-1) (Wheat head blight fungus).